Reading from the N-terminus, the 144-residue chain is 3-hydroxyacyl-[acyl-carrier-protein] dehydratase FabZ (144 aa).

Residue histidine 48 is part of the active site.

This sequence belongs to the thioester dehydratase family. FabZ subfamily.

The protein localises to the cytoplasm. It carries out the reaction a (3R)-hydroxyacyl-[ACP] = a (2E)-enoyl-[ACP] + H2O. In terms of biological role, involved in unsaturated fatty acids biosynthesis. Catalyzes the dehydration of short chain beta-hydroxyacyl-ACPs and long chain saturated and unsaturated beta-hydroxyacyl-ACPs. The polypeptide is 3-hydroxyacyl-[acyl-carrier-protein] dehydratase FabZ (Bacillus licheniformis (strain ATCC 14580 / DSM 13 / JCM 2505 / CCUG 7422 / NBRC 12200 / NCIMB 9375 / NCTC 10341 / NRRL NRS-1264 / Gibson 46)).